Reading from the N-terminus, the 316-residue chain is MADADDSLALRAAWLHFVAGMTQSAVAKRLGLPSVKAHRLIAKAVADGAVKVTIDGDITECIDLENRLADLYGLDYCEVAPDIGEEGLPLMALGHAGANFMRREIEHGDHEVIGIGHGRTLSAAVGYMPRVMANDLRFVSLLGGLTRNFAANPHDVMHRIAEKTGMPAYVMPVPFFANTAEDREVLLAQRGVTTVFDMGCRAELKIVGIGTVDAQAQLVTSGMIELGEVEEIANLGGVGEMLGHFFNANGQWLETALTGRTIAASVENADMSRIVALAGGLSKVDAIRAVLKSGRLYGLITDERTAKALIGQPNGK.

A DNA-binding region (H-T-H motif) is located at residues 23 to 42; the sequence is QSAVAKRLGLPSVKAHRLIA.

Belongs to the SorC transcriptional regulatory family.

Its activity is regulated as follows. Erythritol may act as an inducer, probably by binding to EryD and inhibiting its repressor activity. Its function is as follows. Represses the expression of the eryABCD operon, which is involved in erythritol catabolism. The chain is Erythritol catabolism regulatory protein EryD from Brucella abortus (strain 2308).